A 235-amino-acid chain; its full sequence is PRA1 family protein 1 (235 aa).

Polar residues predominate over residues 1-17; the sequence is MESNSNSNETMYGNPNI. The disordered stretch occupies residues 1–55; sequence MESNSNSNETMYGNPNINMGFVDSGNSNIGNNTGSMSPPPQQQQQPQQASSTPAG. Low complexity predominate over residues 24 to 48; it reads SGNSNIGNNTGSMSPPPQQQQQPQQ. Transmembrane regions (helical) follow at residues 144-164 and 187-207; these read SVFF…LLFI and AFLS…LVGA.

This sequence belongs to the PRA1 family.

Its subcellular location is the membrane. May act as a general Rab protein regulator. The sequence is that of PRA1 family protein 1 (prafA) from Dictyostelium discoideum (Social amoeba).